A 144-amino-acid chain; its full sequence is Large ribosomal subunit protein uL15 (144 aa).

The disordered stretch occupies residues 1–54 (MHLNTLKPAEGAKKLAKRKGRGQGSGNGKMAGRGHKGQKSRSGGMPKIGFEGGQ). A compositionally biased stretch (gly residues) spans 22–31 (GQGSGNGKMA).

It belongs to the universal ribosomal protein uL15 family. As to quaternary structure, part of the 50S ribosomal subunit.

Functionally, binds to the 23S rRNA. In Hydrogenovibrio crunogenus (strain DSM 25203 / XCL-2) (Thiomicrospira crunogena), this protein is Large ribosomal subunit protein uL15.